We begin with the raw amino-acid sequence, 134 residues long: Large ribosomal subunit protein uL14 (134 aa).

It belongs to the universal ribosomal protein uL14 family. In terms of assembly, part of the 50S ribosomal subunit. Forms a cluster with proteins L3 and L19. In the 70S ribosome, L14 and L19 interact and together make contacts with the 16S rRNA in bridges B5 and B8.

Its function is as follows. Binds to 23S rRNA. Forms part of two intersubunit bridges in the 70S ribosome. This is Large ribosomal subunit protein uL14 from Deinococcus deserti (strain DSM 17065 / CIP 109153 / LMG 22923 / VCD115).